The following is a 770-amino-acid chain: DNA ligase 1 (770 aa).

The span at 1–18 (MSTGEGTAEQTATGTPAQ) shows a compositional bias: low complexity. The tract at residues 1-27 (MSTGEGTAEQTATGTPAQNGRESIPSD) is disordered. Residues 57–61 (DAEFD), 106–107 (SL), and Glu-142 contribute to the NAD(+) site. Lys-144 serves as the catalytic N6-AMP-lysine intermediate. Arg-165, Glu-202, Lys-318, and Lys-342 together coordinate NAD(+). Residues Cys-439, Cys-442, Cys-458, and Cys-464 each coordinate Zn(2+). The region spanning 657–746 (STPRTLEGLT…PAAVGDAAEA (90 aa)) is the BRCT domain. Positions 741–770 (GDAAEADGGDAPEESAALQEEKAAAVEETA) are disordered. A compositionally biased stretch (acidic residues) spans 744 to 753 (AEADGGDAPE). Basic and acidic residues predominate over residues 759 to 770 (QEEKAAAVEETA).

This sequence belongs to the NAD-dependent DNA ligase family. LigA subfamily. It depends on Mg(2+) as a cofactor. Mn(2+) serves as cofactor.

It carries out the reaction NAD(+) + (deoxyribonucleotide)n-3'-hydroxyl + 5'-phospho-(deoxyribonucleotide)m = (deoxyribonucleotide)n+m + AMP + beta-nicotinamide D-nucleotide.. DNA ligase that catalyzes the formation of phosphodiester linkages between 5'-phosphoryl and 3'-hydroxyl groups in double-stranded DNA using NAD as a coenzyme and as the energy source for the reaction. It is essential for DNA replication and repair of damaged DNA. The sequence is that of DNA ligase 1 from Pseudarthrobacter chlorophenolicus (strain ATCC 700700 / DSM 12829 / CIP 107037 / JCM 12360 / KCTC 9906 / NCIMB 13794 / A6) (Arthrobacter chlorophenolicus).